A 277-amino-acid polypeptide reads, in one-letter code: Outer kinetochore KNL1 complex subunit ZWINT (277 aa).

The interaction with NDC80 and ZW10 stretch occupies residues 80–155; sequence ASEDTSRQKA…MEKRRAVQNQ (76 aa). Residues 104 to 217 adopt a coiled-coil conformation; the sequence is REHVEAIKIG…RYQTFLQLLY (114 aa). A disordered region spans residues 228–277; that stretch reads AEAEAENLPDDKPQQPTRPQEQSTGDTMGRDPGVSFKAVGLQPAGDVNLP. The span at 241–253 shows a compositional bias: polar residues; that stretch reads QQPTRPQEQSTGD.

As to quaternary structure, component of the KNL1 complex composed of KNL1 and ZWINT. Part of the ten-subunit outer kinetochore KMN network that includes the KNL1, MIS12 and NDC80 complexes; a bioriented kinetochore contains approximately 150 copies of the network. Interacts with the MIS12 complex subunits MIS12 DSN1, and PMF1. Interacts with the NDC80 complex subunit NDC80 during mitosis. Interacts with ZW10. Interacts with CETN3.

The protein localises to the nucleus. Its subcellular location is the chromosome. It is found in the centromere. It localises to the kinetochore. Its function is as follows. Acts as a component of the outer kinetochore KNL1 complex that serves as a docking point for spindle assembly checkpoint components and mediates microtubule-kinetochore interactions. Kinetochores, consisting of a centromere-associated inner segment and a microtubule-contacting outer segment, play a crucial role in chromosome segregation by mediating the physical connection between centromeric DNA and spindle microtubules. The outer kinetochore is made up of the ten-subunit KMN network, comprising the MIS12, NDC80 and KNL1 complexes, and auxiliary microtubule-associated components; together they connect the outer kinetochore with the inner kinetochore, bind microtubules, and mediate interactions with mitotic checkpoint proteins that delay anaphase until chromosomes are bioriented on the spindle. Targets the RZZ complex to the kinetochore at prometaphase. Recruits MAD2L1 to the kinetochore, but is not required for BUB1B localization. In addition to orienting mitotic chromosomes, it is also essential for alignment of homologous chromosomes during meiotic metaphase I. In meiosis I, required to activate the spindle assembly checkpoint at unattached kinetochores to correct erroneous kinetochore-microtubule attachments. The sequence is that of Outer kinetochore KNL1 complex subunit ZWINT (ZWINT) from Homo sapiens (Human).